We begin with the raw amino-acid sequence, 220 residues long: Ras-related protein Rab-3 (220 aa).

Positions 30, 33, 34, 35, 36, 47, 48, 52, 53, 79, 134, 137, 165, and 166 each coordinate GTP. Mg(2+) is bound at residue threonine 35. The Effector region signature appears at 50 to 58 (FVSTVGIDF). Mg(2+) is bound at residue threonine 53. Positions 194 to 220 (PTLVGGGQKGQRLTDQPQGTPNANCNC) are disordered. The span at 204-220 (QRLTDQPQGTPNANCNC) shows a compositional bias: polar residues. 2 S-geranylgeranyl cysteine lipidation sites follow: cysteine 218 and cysteine 220. Cysteine 220 carries the cysteine methyl ester modification.

This sequence belongs to the small GTPase superfamily. Rab family. Interacts with Rph.

It localises to the cytoplasmic vesicle. The protein localises to the secretory vesicle. Its subcellular location is the synaptic vesicle. Functionally, involved in exocytosis by regulating a late step in synaptic vesicle fusion. Could play a role in neurotransmitter release by regulating membrane flow in the nerve terminal. This Drosophila melanogaster (Fruit fly) protein is Ras-related protein Rab-3 (Rab3).